We begin with the raw amino-acid sequence, 286 residues long: 4-diphosphocytidyl-2-C-methyl-D-erythritol kinase (286 aa).

K11 is an active-site residue. ATP is bound at residue 93–103 (PFGAGLGGGSS). The active site involves D135.

It belongs to the GHMP kinase family. IspE subfamily.

It catalyses the reaction 4-CDP-2-C-methyl-D-erythritol + ATP = 4-CDP-2-C-methyl-D-erythritol 2-phosphate + ADP + H(+). It participates in isoprenoid biosynthesis; isopentenyl diphosphate biosynthesis via DXP pathway; isopentenyl diphosphate from 1-deoxy-D-xylulose 5-phosphate: step 3/6. Catalyzes the phosphorylation of the position 2 hydroxy group of 4-diphosphocytidyl-2C-methyl-D-erythritol. This is 4-diphosphocytidyl-2-C-methyl-D-erythritol kinase from Chlorobaculum tepidum (strain ATCC 49652 / DSM 12025 / NBRC 103806 / TLS) (Chlorobium tepidum).